The chain runs to 253 residues: Pimeloyl-[acyl-carrier protein] methyl ester esterase (253 aa).

Substrate-binding positions include Trp-18, 78-79 (SL), and 139-143 (FLALD). Ser-78 functions as the Nucleophile in the catalytic mechanism. Active-site residues include Asp-203 and His-231. Residue His-231 participates in substrate binding.

Belongs to the AB hydrolase superfamily. Carboxylesterase BioH family. As to quaternary structure, monomer.

It is found in the cytoplasm. It carries out the reaction 6-carboxyhexanoyl-[ACP] methyl ester + H2O = 6-carboxyhexanoyl-[ACP] + methanol + H(+). Its pathway is cofactor biosynthesis; biotin biosynthesis. Its function is as follows. The physiological role of BioH is to remove the methyl group introduced by BioC when the pimeloyl moiety is complete. It allows to synthesize pimeloyl-ACP via the fatty acid synthetic pathway through the hydrolysis of the ester bonds of pimeloyl-ACP esters. This is Pimeloyl-[acyl-carrier protein] methyl ester esterase from Xanthomonas campestris pv. campestris (strain 8004).